We begin with the raw amino-acid sequence, 159 residues long: MATLIRLLRLLPVASSSAVLMFALDEHLIFGTWVQPSIRERANANLPAWWTRGGLRWRWVLIIFYPVNYILGILNLFISQDQLQDTGASKWYTLGLLFSIAHMFYLFRALKLIAAIENDEPKGNVTYSMGRWLKMNWTRALLTDLPAWLCFIAAALKAL.

The N-terminal stretch at Met1–Asp25 is a signal peptide. The next 2 membrane-spanning stretches (helical) occupy residues Trp59–Ser79 and Leu96–Ile116. Asn124 and Asn136 each carry an N-linked (GlcNAc...) asparagine glycan. A helical membrane pass occupies residues Arg139–Leu159.

It belongs to the epoxidase xenD family.

The protein resides in the membrane. The protein operates within mycotoxin biosynthesis. Its function is as follows. Probable epoxidase; part of the gene scp cluster that mediates the biosynthesis of a hirsutellone-like compound that has still to be identified. This is Probable epoxidase scpX from Mollisia scopiformis (Conifer needle endophyte fungus).